Here is a 1396-residue protein sequence, read N- to C-terminus: Sterol 3-beta-glucosyltransferase (1396 aa).

Residues 1–16 show a composition bias toward basic and acidic residues; that stretch reads MRPLLDEAKRRVDRRL. Disordered regions lie at residues 1-59, 82-193, and 206-233; these read MRPL…TKEG, HARF…AAPV, and SKGS…TSAS. The span at 18 to 28 shows a compositional bias: polar residues; sequence ASRQSLSTSRI. Basic and acidic residues-rich tracts occupy residues 35–44 and 82–108; these read ERLKDDHDAQ and HARF…KESQ. Residues 156-175 show a composition bias toward polar residues; it reads GSSQRQGGAQTEPSTGNQMS. Positions 237–288 constitute a GRAM 1 domain; the sequence is LRLMEMFGFESPEKVLVEYACSLVQSMLLQGYMYVTEGHICFYAYLPRKSTV. One can recognise a PH domain in the interval 289-387; the sequence is AIKSGYLYKR…WVKSLQKVIF (99 aa). Composition is skewed to polar residues over residues 459–479 and 487–497; these read QAKN…QSRA and SLTSGLSQVLG. 2 disordered regions span residues 459-531 and 576-635; these read QAKN…RDLS and FRRQ…VQQS. Residues 585 to 595 are compositionally biased toward basic and acidic residues; the sequence is QFGRRHSDETA. The 67-residue stretch at 719-785 folds into the GRAM 2 domain; sequence DRFRAHFALP…KDVENVEKEK (67 aa). The tract at residues 841-880 is disordered; that stretch reads EQDESEAAKAEHRMLQEARKDASGGLIPQTPSDESPEIHP. Residues 846 to 862 show a composition bias toward basic and acidic residues; it reads EAAKAEHRMLQEARKDA. The UDP-alpha-D-glucose site is built by serine 907, arginine 908, aspartate 910, alanine 1210, histidine 1212, histidine 1225, glycine 1229, threonine 1230, aspartate 1249, and glutamine 1250.

The protein belongs to the glycosyltransferase 28 family.

It is found in the cytoplasm. Its subcellular location is the preautophagosomal structure membrane. It carries out the reaction a sterol + UDP-alpha-D-glucose = a sterol 3-beta-D-glucoside + UDP + H(+). It catalyses the reaction ergosterol + UDP-alpha-D-glucose = ergosteryl 3-beta-D-glucoside + UDP + H(+). In terms of biological role, sterol glycosyltransferase responsible for the glycosylation of ergosterol to form ergosterol-glucoside. This Aspergillus terreus (strain NIH 2624 / FGSC A1156) protein is Sterol 3-beta-glucosyltransferase.